The primary structure comprises 52 residues: Lantibiotic gallidermin (52 aa).

The propeptide occupies 1–30; the sequence is MEAVKEKNELFDLDVKVNAKESNDSGAEPR. A cross-link (lanthionine (Ser-Cys)) is located at residues 33–37; it reads SKFLC. Positions 38–41 form a cross-link, beta-methyllanthionine (Thr-Cys); sequence TPGC. Thr44 bears the (Z)-2,3-didehydrobutyrine mark. Positions 46 to 51 form a cross-link, lanthionine (Ser-Cys); that stretch reads SFNSYC. The S-(2-aminovinyl)-D-cysteine (Ser-Cys) cross-link spans 49-52; sequence SYCC.

This sequence belongs to the type A lantibiotic family. Post-translationally, maturation of lantibiotics involves the enzymatic conversion of Thr, and Ser into dehydrated AA and the formation of thioether bonds with cysteine. The C-terminal lanthionine undergoes decarboxylation. This is followed by membrane translocation and cleavage of the modified precursor. The structure of the 2,3-didehydrobutyrine is not discussed in PubMed:1932575. However, in Fig. 5 the NMR model appears to have the Z-isomer.

Its function is as follows. Lanthionine-containing peptide antibiotic (lantibiotic) active on Gram-positive bacteria. The bactericidal activity of lantibiotics is based on depolarization of energized bacterial cytoplasmic membranes, initiated by the formation of aqueous transmembrane pores. This is Lantibiotic gallidermin (gdmA) from Staphylococcus gallinarum.